The following is a 203-amino-acid chain: MARFRGSITKVSRRLGVALSPKAEKYLERRPFAPGQHGQGRRGKISEYALQLREKQKMKYLYGILEKQFRNYYKKAVSQRGVTGDNLVKLIERRLDNVVFRAGFAPSRAGARQLVSHSHLLVNGRKVNIPSFLVSPGDLIEFRQKSRNMDAVTDALNRAPDARIPAWIQVDKANQKAVFLSVPERVDIQEPYNEQLVVELYSK.

Positions 93–154 constitute an S4 RNA-binding domain; the sequence is RRLDNVVFRA…KSRNMDAVTD (62 aa).

It belongs to the universal ribosomal protein uS4 family. As to quaternary structure, part of the 30S ribosomal subunit. Contacts protein S5. The interaction surface between S4 and S5 is involved in control of translational fidelity.

Its function is as follows. One of the primary rRNA binding proteins, it binds directly to 16S rRNA where it nucleates assembly of the body of the 30S subunit. In terms of biological role, with S5 and S12 plays an important role in translational accuracy. The protein is Small ribosomal subunit protein uS4 of Chlorobium luteolum (strain DSM 273 / BCRC 81028 / 2530) (Pelodictyon luteolum).